Reading from the N-terminus, the 170-residue chain is Urease accessory protein UreE (170 aa).

Belongs to the UreE family.

The protein localises to the cytoplasm. Its function is as follows. Involved in urease metallocenter assembly. Binds nickel. Probably functions as a nickel donor during metallocenter assembly. This is Urease accessory protein UreE from Helicobacter pylori (strain P12).